We begin with the raw amino-acid sequence, 218 residues long: Phosphoenolpyruvate guanylyltransferase (218 aa).

Phosphoenolpyruvate is bound by residues Thr151, Gly166, and Ser169.

This sequence belongs to the CofC family.

The enzyme catalyses phosphoenolpyruvate + GTP + H(+) = enolpyruvoyl-2-diphospho-5'-guanosine + diphosphate. It functions in the pathway cofactor biosynthesis; coenzyme F420 biosynthesis. Its function is as follows. Guanylyltransferase that catalyzes the activation of phosphoenolpyruvate (PEP) as enolpyruvoyl-2-diphospho-5'-guanosine, via the condensation of PEP with GTP. It is involved in the biosynthesis of coenzyme F420, a hydride carrier cofactor. This Mycobacterium sp. (strain KMS) protein is Phosphoenolpyruvate guanylyltransferase.